The chain runs to 374 residues: P2Y purinoceptor 2 (374 aa).

The Extracellular portion of the chain corresponds to 1-32 (MAAGLDSWNSTINGTWEGDELGYKCRFNEDFK). N-linked (GlcNAc...) asparagine glycosylation is found at asparagine 9 and asparagine 13. A helical transmembrane segment spans residues 33 to 59 (YVLLPVSYGVVCVLGLCLNVVALYIFL). Over 60 to 70 (CRLKTWNASTT) the chain is Cytoplasmic. A helical transmembrane segment spans residues 71 to 93 (YMFHLAVSDSLYAASLPLLVYYY). Residues 94–110 (AQGDHWPFSTVLCKLVR) are Extracellular-facing. An intrachain disulfide couples cysteine 106 to cysteine 183. Residues 111 to 129 (FLFYTNLYCSILFLTCISV) form a helical membrane-spanning segment. Residues 130 to 152 (HRCLGVLRPLHSLSWGHARYARR) are Cytoplasmic-facing. A helical transmembrane segment spans residues 153–172 (VAAVVWVLVLACQAPVLYFV). The Extracellular portion of the chain corresponds to 173–194 (TTSVRGTRITCHDTSARELFSH). The chain crosses the membrane as a helical span at residues 195 to 220 (FVAYSSVMLGLLFAVPFSIILVCYVL). The Cytoplasmic portion of the chain corresponds to 221–245 (MARRLLKPAYGTTGLPRAKRKSVRT). The chain crosses the membrane as a helical span at residues 246 to 268 (IALVLAVFALCFLPFHVTRTLYY). Residues 269–286 (SFRSLDLSCHTLNAINMA) lie on the Extracellular side of the membrane. Residues 287 to 308 (YKITRPLASANSCLDPVLYFLA) form a helical membrane-spanning segment. The Cytoplasmic segment spans residues 309–374 (GQRLVRFARD…AGSETKDIRL (66 aa)). The interval 318–374 (DAKPATEPTPSPQARRKLGLHRPNRTDTVRKDLSISSDDSRRTESTPAGSETKDIRL) is disordered. Basic residues predominate over residues 331–340 (ARRKLGLHRP). Over residues 341–361 (NRTDTVRKDLSISSDDSRRTE) the composition is skewed to basic and acidic residues.

Belongs to the G-protein coupled receptor 1 family.

The protein resides in the cell membrane. In terms of biological role, receptor for ATP and UTP coupled to G-proteins that activate a phosphatidylinositol-calcium second messenger system. The affinity range is UTP = ATP &gt; ATP-gamma-S &gt;&gt; 2-methylthio-ATP = ADP. In Rattus norvegicus (Rat), this protein is P2Y purinoceptor 2 (P2ry2).